Here is a 311-residue protein sequence, read N- to C-terminus: Pyrimidine-specific ribonucleoside hydrolase RihA (311 aa).

His240 is a catalytic residue.

Belongs to the IUNH family. RihA subfamily.

Hydrolyzes with equal efficiency cytidine or uridine to ribose and cytosine or uracil, respectively. The polypeptide is Pyrimidine-specific ribonucleoside hydrolase RihA (Escherichia coli O127:H6 (strain E2348/69 / EPEC)).